Here is a 127-residue protein sequence, read N- to C-terminus: Cold-regulated protein 1 (127 aa).

A disordered region spans residues 39–127 (ARGPPPSPAP…WTRPRMARAR (89 aa)). The segment covering 85–101 (SRRRRRRRATRRARSRM) has biased composition (basic residues). Positions 102–121 (PRTTPWRAPRAPARAWWTRP) are enriched in low complexity.

The protein is Cold-regulated protein 1 of Hordeum vulgare (Barley).